Consider the following 349-residue polypeptide: S-adenosylmethionine:tRNA ribosyltransferase-isomerase (349 aa).

Belongs to the QueA family. In terms of assembly, monomer.

Its subcellular location is the cytoplasm. The catalysed reaction is 7-aminomethyl-7-carbaguanosine(34) in tRNA + S-adenosyl-L-methionine = epoxyqueuosine(34) in tRNA + adenine + L-methionine + 2 H(+). The protein operates within tRNA modification; tRNA-queuosine biosynthesis. In terms of biological role, transfers and isomerizes the ribose moiety from AdoMet to the 7-aminomethyl group of 7-deazaguanine (preQ1-tRNA) to give epoxyqueuosine (oQ-tRNA). This Ruegeria pomeroyi (strain ATCC 700808 / DSM 15171 / DSS-3) (Silicibacter pomeroyi) protein is S-adenosylmethionine:tRNA ribosyltransferase-isomerase.